The primary structure comprises 233 residues: Ribosomal RNA small subunit methyltransferase G (233 aa).

Residues glycine 91, methionine 96, 142–143, and arginine 157 contribute to the S-adenosyl-L-methionine site; that span reads VE.

It belongs to the methyltransferase superfamily. RNA methyltransferase RsmG family.

It is found in the cytoplasm. The catalysed reaction is guanosine(527) in 16S rRNA + S-adenosyl-L-methionine = N(7)-methylguanosine(527) in 16S rRNA + S-adenosyl-L-homocysteine. In terms of biological role, specifically methylates the N7 position of guanine in position 527 of 16S rRNA. The chain is Ribosomal RNA small subunit methyltransferase G from Cupriavidus necator (strain ATCC 17699 / DSM 428 / KCTC 22496 / NCIMB 10442 / H16 / Stanier 337) (Ralstonia eutropha).